Consider the following 168-residue polypeptide: Variant surface antigen D (168 aa).

Positions 1–29 (MKKSIFSKKLLVSFGSLVTLAAIPLIAIS) are cleaved as a signal peptide. The N-palmitoyl cysteine moiety is linked to residue Cys-30. The S-diacylglycerol cysteine moiety is linked to residue Cys-30. The segment at 33 to 168 (TNTDQSQQPG…STSTSNMNTR (136 aa)) is disordered. 2 stretches are compositionally biased toward low complexity: residues 35–44 (TDQSQQPGSG) and 52–71 (GTTTGTDSTTGGQTGSESGT). Residues 72-81 (TTGGQTGTTT) are compositionally biased toward gly residues. 7 tandem repeats follow at residues 81 to 92 (TGGQSDSTSTSK), 93 to 104 (EQGSSDSTSTSK), 105 to 116 (EQGSSDSTSTSK), 117 to 128 (EQGSSDSTSTSK), 129 to 140 (EQGSSDSTSTSK), 141 to 152 (EQGSSDSTSTSK), and 153 to 164 (EQGSSDSTSTSN). Positions 81–164 (TGGQSDSTST…GSSDSTSTSN (84 aa)) are 7 X 12 AA tandem repeats. The span at 82-168 (GGQSDSTSTS…STSTSNMNTR (87 aa)) shows a compositional bias: low complexity.

It localises to the cell membrane. Functionally, responsible for the antigenic diversity for host adaptation. Expression in E.coli of a construct containing vlpD, vlpE, and vlpF yields antigenically distinguishable products corresponding to each gene. This chain is Variant surface antigen D (vlpD), found in Mesomycoplasma hyorhinis (Mycoplasma hyorhinis).